The sequence spans 476 residues: mRNA cap guanine-N(7) methyltransferase (476 aa).

Over residues 1–14 (MANSTKAEEYEKMS) the composition is skewed to basic and acidic residues. A disordered region spans residues 1–128 (MANSTKAEEY…TGDGTQNKRK (128 aa)). Over residues 20 to 50 (ASVNSEAESSFSINENTTASGTGLSGKTSVC) the composition is skewed to polar residues. Phosphoserine is present on residues serine 24, serine 28, and serine 29. 3 stretches are compositionally biased toward basic and acidic residues: residues 54–68 (DTARKRKEFEDDLVK), 84–93 (LDPEIVPEEK), and 107–117 (RETEDVPKDEY). Position 118 is a phosphoserine (serine 118). A Nuclear localization signal motif is present at residues 126-128 (KRK). An mRNA cap 0 methyltransferase domain is found at 167–475 (SRIFYLRNFN…IYLVFAFEKQ (309 aa)). MRNA is bound at residue 176–177 (NN). S-adenosyl-L-methionine is bound by residues lysine 180, glycine 205, aspartate 227, aspartate 261, glutamine 284, and tyrosine 289.

The protein belongs to the class I-like SAM-binding methyltransferase superfamily. mRNA cap 0 methyltransferase family. In terms of assembly, interacts with importin alpha, leading to stimulate both RNA-binding and methyltransferase activity. Interaction with importin alpha and beta is required for its nuclear localization, importin beta dissociating in response to RanGTP, allowing RNMT-importin alpha to bind RNA substrates. Interacts with elongating form of polymerase II and RNGTT. Interacts with RAMAC, this interaction significantly enhances RNA-binding and cap methyltransferase activity.

The protein resides in the nucleus. The enzyme catalyses a 5'-end (5'-triphosphoguanosine)-ribonucleoside in mRNA + S-adenosyl-L-methionine = a 5'-end (N(7)-methyl 5'-triphosphoguanosine)-ribonucleoside in mRNA + S-adenosyl-L-homocysteine. Methyltransferase activity is activated by RAMAC. Catalytic subunit of the mRNA-capping methyltransferase RNMT:RAMAC complex that methylates the N7 position of the added guanosine to the 5'-cap structure of mRNAs. Binds RNA containing 5'-terminal GpppC. The polypeptide is mRNA cap guanine-N(7) methyltransferase (RNMT) (Macaca fascicularis (Crab-eating macaque)).